The chain runs to 85 residues: Dual endothelin-1/VEGF signal peptide receptor (85 aa).

Residues 1–18 (MTMFKGSNEMKSRWNWGS) are Extracellular-facing. The helical transmembrane segment at 19 to 37 (ITCIICFTCVGSQLSMSSS) threads the bilayer. Topologically, residues 38–85 (KASNFSGPLQLYQRELEIFIVLTDVPNYRLIKENSHLHTTIVDQGRTV) are cytoplasmic.

Post-translationally, N-glycosylated. Expressed in kidney. Expressed in endothelial cells.

Its subcellular location is the cell membrane. Its function is as follows. Dual receptor for both endothelin-1 and the signal sequence of vascular endothelial growth factor A. Does not act as a receptor for angiotensin-2. Does not bind the VEGFA mature protein. May play a role in angiogenesis with a significant role in cardiovascular and neural development. This chain is Dual endothelin-1/VEGF signal peptide receptor, found in Homo sapiens (Human).